The sequence spans 222 residues: Protein GrpE (222 aa).

2 disordered regions span residues 1–21 (MNDG…ENGQ) and 200–222 (KGGP…PEGA).

It belongs to the GrpE family. As to quaternary structure, homodimer.

It is found in the cytoplasm. Its function is as follows. Participates actively in the response to hyperosmotic and heat shock by preventing the aggregation of stress-denatured proteins, in association with DnaK and GrpE. It is the nucleotide exchange factor for DnaK and may function as a thermosensor. Unfolded proteins bind initially to DnaJ; upon interaction with the DnaJ-bound protein, DnaK hydrolyzes its bound ATP, resulting in the formation of a stable complex. GrpE releases ADP from DnaK; ATP binding to DnaK triggers the release of the substrate protein, thus completing the reaction cycle. Several rounds of ATP-dependent interactions between DnaJ, DnaK and GrpE are required for fully efficient folding. This chain is Protein GrpE, found in Chelativorans sp. (strain BNC1).